Here is a 101-residue protein sequence, read N- to C-terminus: RTVGELIQNQIRVGLSRMERVVRERMTTQDVEAITPQTLINIRPVVAAIKEFFGTSQLSQFMDQNNPLSGLTHKRRLSALGPGGLSRERAGLEVRDVHSSH.

The interval 74–101 (KRRLSALGPGGLSRERAGLEVRDVHSSH) is disordered. Positions 86-101 (SRERAGLEVRDVHSSH) are enriched in basic and acidic residues.

It belongs to the RNA polymerase beta chain family. As to quaternary structure, the RNAP catalytic core consists of 2 alpha, 1 beta, 1 beta' and 1 omega subunit. When a sigma factor is associated with the core the holoenzyme is formed, which can initiate transcription.

It carries out the reaction RNA(n) + a ribonucleoside 5'-triphosphate = RNA(n+1) + diphosphate. Its function is as follows. DNA-dependent RNA polymerase catalyzes the transcription of DNA into RNA using the four ribonucleoside triphosphates as substrates. In Mycolicibacterium peregrinum (Mycobacterium peregrinum), this protein is DNA-directed RNA polymerase subunit beta (rpoB).